A 378-amino-acid polypeptide reads, in one-letter code: Quinolinate synthase (378 aa).

Histidine 59 and serine 80 together coordinate iminosuccinate. A [4Fe-4S] cluster-binding site is contributed by cysteine 125. Iminosuccinate-binding positions include 151 to 153 (YAN) and serine 168. Cysteine 212 lines the [4Fe-4S] cluster pocket. Residues 238–240 (HPE) and threonine 255 contribute to the iminosuccinate site. Cysteine 309 is a [4Fe-4S] cluster binding site.

It belongs to the quinolinate synthase family. Type 1 subfamily. Requires [4Fe-4S] cluster as cofactor.

It localises to the cytoplasm. It carries out the reaction iminosuccinate + dihydroxyacetone phosphate = quinolinate + phosphate + 2 H2O + H(+). It participates in cofactor biosynthesis; NAD(+) biosynthesis; quinolinate from iminoaspartate: step 1/1. Catalyzes the condensation of iminoaspartate with dihydroxyacetone phosphate to form quinolinate. The polypeptide is Quinolinate synthase (Burkholderia pseudomallei (strain 1106a)).